A 627-amino-acid chain; its full sequence is uncharacterized protein (627 aa).

This is an uncharacterized protein from Caenorhabditis elegans.